The sequence spans 171 residues: S-ribosylhomocysteine lyase (171 aa).

Fe cation is bound by residues His54, His58, and Cys128.

The protein belongs to the LuxS family. Homodimer. Requires Fe cation as cofactor.

It catalyses the reaction S-(5-deoxy-D-ribos-5-yl)-L-homocysteine = (S)-4,5-dihydroxypentane-2,3-dione + L-homocysteine. Involved in the synthesis of autoinducer 2 (AI-2) which is secreted by bacteria and is used to communicate both the cell density and the metabolic potential of the environment. The regulation of gene expression in response to changes in cell density is called quorum sensing. Catalyzes the transformation of S-ribosylhomocysteine (RHC) to homocysteine (HC) and 4,5-dihydroxy-2,3-pentadione (DPD). In Klebsiella pneumoniae (strain 342), this protein is S-ribosylhomocysteine lyase.